Reading from the N-terminus, the 130-residue chain is Small ribosomal subunit protein uS11 (130 aa).

This sequence belongs to the universal ribosomal protein uS11 family. Part of the 30S ribosomal subunit. Interacts with proteins S7 and S18. Binds to IF-3.

Functionally, located on the platform of the 30S subunit, it bridges several disparate RNA helices of the 16S rRNA. Forms part of the Shine-Dalgarno cleft in the 70S ribosome. The protein is Small ribosomal subunit protein uS11 of Shewanella sediminis (strain HAW-EB3).